A 33-amino-acid chain; its full sequence is Photosystem II reaction center protein Psb30 (33 aa).

Residues 5–25 (IVFQLTSLVLILAAGPLVVVL) traverse the membrane as a helical segment.

This sequence belongs to the Psb30/Ycf12 family. As to quaternary structure, PSII is composed of 1 copy each of membrane proteins PsbA, PsbB, PsbC, PsbD, PsbE, PsbF, PsbH, PsbI, PsbJ, PsbK, PsbL, PsbM, PsbT, PsbX, PsbY, PsbZ, Psb30/Ycf12, peripheral proteins of the oxygen-evolving complex and a large number of cofactors. It forms dimeric complexes.

It localises to the plastid. Its subcellular location is the chloroplast thylakoid membrane. Functionally, a core subunit of photosystem II (PSII), probably helps stabilize the reaction center. This Tetradesmus obliquus (Green alga) protein is Photosystem II reaction center protein Psb30.